We begin with the raw amino-acid sequence, 554 residues long: Formate--tetrahydrofolate ligase (554 aa).

64 to 71 (TPAGEGKS) is a binding site for ATP.

This sequence belongs to the formate--tetrahydrofolate ligase family.

It carries out the reaction (6S)-5,6,7,8-tetrahydrofolate + formate + ATP = (6R)-10-formyltetrahydrofolate + ADP + phosphate. Its pathway is one-carbon metabolism; tetrahydrofolate interconversion. In Leuconostoc citreum (strain KM20), this protein is Formate--tetrahydrofolate ligase.